A 384-amino-acid polypeptide reads, in one-letter code: 3,7-dimethylxanthine N-methyltransferase 1 (384 aa).

Residues Tyr18, Cys61, Asn66, Asp100, Leu101, Ser139, Phe140, and Cys156 each contribute to the S-adenosyl-L-homocysteine site. Tyr157 provides a ligand contact to theobromine. Cys158 contacts S-adenosyl-L-homocysteine. Theobromine is bound by residues His160 and Trp161. Asn178 is a Mg(2+) binding site. Ser237 contacts theobromine. The Mg(2+) site is built by Asp260, Phe262, and Asn263. Tyr368 provides a ligand contact to theobromine.

It belongs to the methyltransferase superfamily. Type-7 methyltransferase family. Mg(2+) is required as a cofactor. In terms of tissue distribution, highly expressed in developing endosperm and immature fruits (grains). Detected in young leaves and flower buds, but not in mature fruits.

It carries out the reaction theobromine + S-adenosyl-L-methionine = caffeine + S-adenosyl-L-homocysteine + H(+). The enzyme catalyses 1,7-dimethylxanthine + S-adenosyl-L-methionine = caffeine + S-adenosyl-L-homocysteine + H(+). The catalysed reaction is 7-methylxanthine + S-adenosyl-L-methionine = theobromine + S-adenosyl-L-homocysteine + H(+). The protein operates within alkaloid biosynthesis. Involved in the biosynthesis of caffeine. Catalyzes the conversion of 7-methylxanthine to caffeine, likely via theobromine as an intermediate. The polypeptide is 3,7-dimethylxanthine N-methyltransferase 1 (Coffea arabica (Arabian coffee)).